A 410-amino-acid chain; its full sequence is uncharacterized protein (410 aa).

His87 lines the Zn(2+) pocket. Residue Asp89 is part of the active site. Asp120 serves as a coordination point for Zn(2+). The active-site Proton acceptor is the Glu154. The Zn(2+) site is built by Glu155, Asp184, and His387.

Belongs to the peptidase M20A family. The cofactor is Zn(2+). Co(2+) serves as cofactor.

This is an uncharacterized protein from Methanocaldococcus jannaschii (strain ATCC 43067 / DSM 2661 / JAL-1 / JCM 10045 / NBRC 100440) (Methanococcus jannaschii).